The chain runs to 2183 residues: Genome polyprotein (2183 aa).

The N-myristoyl glycine; by host moiety is linked to residue G2. Topologically, residues 2–1493 are cytoplasmic; the sequence is GAQVSTQKTG…HVSRAFICLQ (1492 aa). An amphipathic alpha-helix region spans residues 566 to 582; the sequence is FYQGPTEESVERAMGRV. Residues H870 and D888 each act as for protease 2A activity in the active site. Positions 905 and 907 each coordinate Zn(2+). C959 acts as the For protease 2A activity in catalysis. The Zn(2+) site is built by C965 and H967. A membrane-binding region spans residues 1099 to 1171; that stretch reads NNNWLKKFTE…EQSAPSQSDQ (73 aa). The segment at 1099-1237 is oligomerization; it reads NNNWLKKFTE…SPGAGKSVAT (139 aa). The interval 1120 to 1124 is RNA-binding; the sequence is AVKIQ. An SF3 helicase domain is found at 1203-1359; the sequence is EKKMSNYIQF…SMYSQNGKIN (157 aa). 3 residues coordinate Zn(2+): C1367, C1379, and C1384. The C4-type; degenerate zinc-finger motif lies at 1367-1384; that stretch reads CDEECCPVNFKKCCPLVC. The tract at residues 1411 to 1418 is RNA-binding; sequence EYNHRHSV. The interval 1422–1427 is oligomerization; the sequence is LEALFQ. An intramembrane segment occupies 1494–1509; that stretch reads ALTTFVSVAGIIYIIY. Topologically, residues 1510–2183 are cytoplasmic; the sequence is KLFAGFQGAY…TLRRKWLDAF (674 aa). Y1519 carries the O-(5'-phospho-RNA)-tyrosine modification. In terms of domain architecture, Peptidase C3 spans 1539–1717; the sequence is GPAFEFAVAM…FSASLLRHYF (179 aa). Residues H1578, E1609, and C1685 each act as for protease 3C activity in the active site. Positions 1948-2064 constitute a RdRp catalytic domain; it reads GHLRAFDYSG…SYPLPIDASL (117 aa). Mg(2+) is bound by residues D1954 and D2050.

Belongs to the picornaviruses polyprotein family. As to quaternary structure, interacts with capsid protein VP1 and capsid protein VP3 to form heterotrimeric protomers. Interacts with capsid protein VP0, and capsid protein VP3 to form heterotrimeric protomers. Five protomers subsequently associate to form pentamers which serve as building blocks for the capsid. Interacts with capsid protein VP2, capsid protein VP3 and capsid protein VP4 following cleavage of capsid protein VP0. Interacts with host CXADR. In terms of assembly, interacts with capsid protein VP1 and capsid protein VP3 in the mature capsid. As to quaternary structure, interacts with capsid protein VP0 and capsid protein VP1 to form heterotrimeric protomers. Five protomers subsequently associate to form pentamers which serve as building blocks for the capsid. Interacts with capsid protein VP4 in the mature capsid. Interacts with protein 2C; this interaction may be important for virion morphogenesis. Interacts with capsid protein VP1 and capsid protein VP3. In terms of assembly, homodimer. As to quaternary structure, homohexamer; forms a hexameric ring structure with 6-fold symmetry characteristic of AAA+ ATPases. Interacts (via N-terminus) with host RTN3 (via reticulon domain); this interaction is important for viral replication. Interacts with capsid protein VP3; this interaction may be important for virion morphogenesis. Interacts with protein 3CD. In terms of assembly, homodimer. Interacts with host GBF1. Interacts (via GOLD domain) with host ACBD3 (via GOLD domain); this interaction allows the formation of a viral protein 3A/ACBD3 heterotetramer with a 2:2 stoichiometry, which will stimulate the recruitment of host PI4KB in order to synthesize PI4P at the viral RNA replication sites. As to quaternary structure, interacts with RNA-directed RNA polymerase. Interacts with protein 3AB and with RNA-directed RNA polymerase. In terms of assembly, interacts with Viral protein genome-linked and with protein 3CD. The cofactor is Mg(2+). Specific enzymatic cleavages in vivo by the viral proteases yield processing intermediates and the mature proteins. Post-translationally, myristoylation is required for the formation of pentamers during virus assembly. Further assembly of 12 pentamers and a molecule of genomic RNA generates the provirion. In terms of processing, during virion maturation, immature virions are rendered infectious following cleavage of VP0 into VP4 and VP2. This maturation seems to be an autocatalytic event triggered by the presence of RNA in the capsid and it is followed by a conformational change infectious virion. Myristoylation is required during RNA encapsidation and formation of the mature virus particle. Post-translationally, VPg is uridylylated by the polymerase into VPg-pUpU. This acts as a nucleotide-peptide primer for the genomic RNA replication.

Its subcellular location is the virion. It is found in the host cytoplasm. The protein resides in the host cytoplasmic vesicle membrane. The protein localises to the host nucleus. The enzyme catalyses a ribonucleoside 5'-triphosphate + H2O = a ribonucleoside 5'-diphosphate + phosphate + H(+). It carries out the reaction Selective cleavage of Tyr-|-Gly bond in the picornavirus polyprotein.. It catalyses the reaction RNA(n) + a ribonucleoside 5'-triphosphate = RNA(n+1) + diphosphate. The catalysed reaction is Selective cleavage of Gln-|-Gly bond in the poliovirus polyprotein. In other picornavirus reactions Glu may be substituted for Gln, and Ser or Thr for Gly.. Its activity is regulated as follows. Replication or transcription is subject to high level of random mutations by the nucleotide analog ribavirin. Its function is as follows. Forms an icosahedral capsid of pseudo T=3 symmetry with capsid proteins VP2 and VP3. The capsid is 300 Angstroms in diameter, composed of 60 copies of each capsid protein and enclosing the viral positive strand RNA genome. Capsid protein VP1 mainly forms the vertices of the capsid. Capsid protein VP1 interacts with host CXADR to provide virion attachment to target host cells. This attachment induces virion internalization. Tyrosine kinases are probably involved in the entry process. After binding to its receptor, the capsid undergoes conformational changes. Capsid protein VP1 N-terminus (that contains an amphipathic alpha-helix) and capsid protein VP4 are externalized. Together, they shape a pore in the host membrane through which viral genome is translocated to host cell cytoplasm. In terms of biological role, forms an icosahedral capsid of pseudo T=3 symmetry with capsid proteins VP2 and VP3. The capsid is 300 Angstroms in diameter, composed of 60 copies of each capsid protein and enclosing the viral positive strand RNA genome. Functionally, lies on the inner surface of the capsid shell. After binding to the host receptor, the capsid undergoes conformational changes. Capsid protein VP4 is released, Capsid protein VP1 N-terminus is externalized, and together, they shape a pore in the host membrane through which the viral genome is translocated into the host cell cytoplasm. Component of immature procapsids, which is cleaved into capsid proteins VP4 and VP2 after maturation. Allows the capsid to remain inactive before the maturation step. Its function is as follows. Cysteine protease that cleaves viral polyprotein and specific host proteins. It is responsible for the autocatalytic cleavage between the P1 and P2 regions, which is the first cleavage occurring in the polyprotein. Also cleaves the host translation initiation factor EIF4G1, in order to shut down the capped cellular mRNA translation. Inhibits the host nucleus-cytoplasm protein and RNA trafficking by cleaving host members of the nuclear pores. Counteracts stress granule formation probably by antagonizing its assembly or promoting its dissassembly. Cleaves and inhibits host IFIH1/MDA5, thereby inhibiting the type-I IFN production and the establishment of the antiviral state. Cleaves and inhibits host MAVS, thereby inhibiting the type-I IFN production and the establishment of the antiviral state. In terms of biological role, plays an essential role in the virus replication cycle by acting as a viroporin. Creates a pore in the host endoplasmic reticulum and as a consequence releases Ca2+ in the cytoplasm of infected cell. In turn, high levels of cytoplasmic calcium may trigger membrane trafficking and transport of viral ER-associated proteins to viroplasms, sites of viral genome replication. Functionally, induces and associates with structural rearrangements of intracellular membranes. Displays RNA-binding, nucleotide binding and NTPase activities. May play a role in virion morphogenesis and viral RNA encapsidation by interacting with the capsid protein VP3. Localizes the viral replication complex to the surface of membranous vesicles. Together with protein 3CD binds the Cis-Active RNA Element (CRE) which is involved in RNA synthesis initiation. Acts as a cofactor to stimulate the activity of 3D polymerase, maybe through a nucleid acid chaperone activity. Its function is as follows. Localizes the viral replication complex to the surface of membranous vesicles. It inhibits host cell endoplasmic reticulum-to-Golgi apparatus transport and causes the disassembly of the Golgi complex, possibly through GBF1 interaction. This would result in depletion of MHC, trail receptors and IFN receptors at the host cell surface. Plays an essential role in viral RNA replication by recruiting ACBD3 and PI4KB at the viral replication sites, thereby allowing the formation of the rearranged membranous structures where viral replication takes place. In terms of biological role, acts as a primer for viral RNA replication and remains covalently bound to viral genomic RNA. VPg is uridylylated prior to priming replication into VPg-pUpU. The oriI viral genomic sequence may act as a template for this. The VPg-pUpU is then used as primer on the genomic RNA poly(A) by the RNA-dependent RNA polymerase to replicate the viral genome. During genome replication, the VPg-RNA linkage is removed by the host TDP2, thereby accelerating replication. During the late stage of the replication cycle, host TDP2 is excluded from sites of viral RNA synthesis and encapsidation, allowing for the generation of progeny virions. Functionally, involved in the viral replication complex and viral polypeptide maturation. It exhibits protease activity with a specificity and catalytic efficiency that is different from protease 3C. Protein 3CD lacks polymerase activity. Protein 3CD binds to the 5'UTR of the viral genome. Replicates the viral genomic RNA on the surface of intracellular membranes. May form linear arrays of subunits that propagate along a strong head-to-tail interaction called interface-I. Covalently attaches UMP to a tyrosine of VPg, which is used to prime RNA synthesis. The positive stranded RNA genome is first replicated at virus induced membranous vesicles, creating a dsRNA genomic replication form. This dsRNA is then used as template to synthesize positive stranded RNA genomes. ss(+)RNA genomes are either translated, replicated or encapsidated. Its function is as follows. Major viral protease that mediates proteolytic processing of the polyprotein. Cleaves host EIF5B, contributing to host translation shutoff. Also cleaves host PABPC1, contributing to host translation shutoff. Cleaves host NLRP1, triggers host N-glycine-mediated degradation of the autoinhibitory NLRP1 N-terminal fragment. The protein is Genome polyprotein of Coxsackievirus B4 (strain E2).